Reading from the N-terminus, the 500-residue chain is Replication factor C large subunit (500 aa).

Residue 44 to 51 (GSPGVGKT) coordinates ATP. The interval 443–500 (HAADDLGASDGETTNASGTASSSGDDGDADGTTDGDGSDANDGNDDDDDGQAGLSDFV) is disordered. Residues 455–466 (TTNASGTASSSG) are compositionally biased toward low complexity. Residues 467-492 (DDGDADGTTDGDGSDANDGNDDDDDG) show a composition bias toward acidic residues.

This sequence belongs to the activator 1 small subunits family. RfcL subfamily. Heteromultimer composed of small subunits (RfcS) and large subunits (RfcL).

Its function is as follows. Part of the RFC clamp loader complex which loads the PCNA sliding clamp onto DNA. The chain is Replication factor C large subunit from Halorubrum lacusprofundi (strain ATCC 49239 / DSM 5036 / JCM 8891 / ACAM 34).